A 503-amino-acid chain; its full sequence is Palmitoleoyl-protein carboxylesterase NOTUM (503 aa).

A signal peptide spans 1–19; the sequence is MGGEVRVLLLLGLLHWVGG. A disordered region spans residues 23–53; that stretch reads RKTWRRRGQQPPQPPPPPPLPQRAEVEPGAG. Pro residues predominate over residues 33 to 43; it reads PPQPPPPPPLP. Ser88 is modified (phosphoserine). Asn103 is a glycosylation site (N-linked (GlcNAc...) asparagine). Active-site charge relay system residues include Ser239, Asp347, and His396.

This sequence belongs to the pectinacetylesterase family. Notum subfamily. In terms of tissue distribution, widely expressed. Expressed in lung, ovary, kidney, liver and brain. Not detected in thymus, heart, spleen, stomach, skeletal muscle and bone marrow.

Its subcellular location is the secreted. The enzyme catalyses [Wnt protein]-O-(9Z)-hexadecenoyl-L-serine + H2O = [Wnt protein]-L-serine + (9Z)-hexadecenoate + H(+). Carboxylesterase that acts as a key negative regulator of the Wnt signaling pathway by specifically mediating depalmitoleoylation of WNT proteins. Serine palmitoleoylation of WNT proteins is required for efficient binding to frizzled receptors. This chain is Palmitoleoyl-protein carboxylesterase NOTUM, found in Mus musculus (Mouse).